The sequence spans 66 residues: Large ribosomal subunit protein bL33c (66 aa).

The protein belongs to the bacterial ribosomal protein bL33 family.

The protein localises to the plastid. It localises to the chloroplast. The polypeptide is Large ribosomal subunit protein bL33c (Jasminum nudiflorum (Winter jasmine)).